A 220-amino-acid polypeptide reads, in one-letter code: Chaperone protein TorD (220 aa).

It belongs to the TorD/DmsD family. TorD subfamily.

Its subcellular location is the cytoplasm. Its function is as follows. Involved in the biogenesis of TorA. Acts on TorA before the insertion of the molybdenum cofactor and, as a result, probably favors a conformation of the apoenzyme that is competent for acquiring the cofactor. The chain is Chaperone protein TorD from Vibrio cholerae serotype O1 (strain ATCC 39315 / El Tor Inaba N16961).